We begin with the raw amino-acid sequence, 300 residues long: Alpha-tubulin N-acetyltransferase 1 (300 aa).

Residues 1-190 (MEFPFDVDAL…NNFVIFEGFF (190 aa)) form the N-acetyltransferase domain. At Lys-56 the chain carries N6-acetyllysine; by autocatalysis. 124-137 (FYIHESLQRHGHGR) lines the acetyl-CoA pocket. Lys-146 is modified (N6-acetyllysine; by autocatalysis). Position 160–169 (160–169 (SQKLLKFLNK)) interacts with acetyl-CoA. An N6-acetyllysine; by autocatalysis mark is found at Lys-210 and Lys-221. Disordered stretches follow at residues 229–263 (PLNRAPRRATPPAHPPPRSSSLGNSPERGPLRPFV) and 280–300 (TARLLLATDPGGSPAQRRRTR). Residues Ser-249 and Ser-253 each carry the phosphoserine modification. Arg-282 carries the asymmetric dimethylarginine modification. Ser-292 carries the phosphoserine modification. Position 300 is an omega-N-methylarginine (Arg-300).

Belongs to the acetyltransferase ATAT1 family. Component of the BBSome complex. Interacts with AP2 alpha-adaptins, including AP2A2, but not with AP1 gamma-adaptin (AP1G1/AP1G2); this interaction is required for efficient alpha-tubulin acetylation, hence clathrin-coated pits are sites of microtubule acetylation. Autoacetylation strongly increases tubulin acetylation.

Its subcellular location is the cytoplasm. It is found in the membrane. The protein resides in the clathrin-coated pit. It localises to the cell junction. The protein localises to the focal adhesion. Its subcellular location is the cell projection. It is found in the axon. The protein resides in the cytoskeleton. It localises to the spindle. The catalysed reaction is L-lysyl-[alpha-tubulin] + acetyl-CoA = N(6)-acetyl-L-lysyl-[alpha-tubulin] + CoA + H(+). In terms of biological role, specifically acetylates 'Lys-40' in alpha-tubulin on the lumenal side of microtubules. Promotes microtubule destabilization and accelerates microtubule dynamics; this activity may be independent of acetylation activity. Acetylates alpha-tubulin with a slow enzymatic rate, due to a catalytic site that is not optimized for acetyl transfer. Enters the microtubule through each end and diffuses quickly throughout the lumen of microtubules. Acetylates only long/old microtubules because of its slow acetylation rate since it does not have time to act on dynamically unstable microtubules before the enzyme is released. Required for normal sperm flagellar function. Promotes directional cell locomotion and chemotaxis, through AP2A2-dependent acetylation of alpha-tubulin at clathrin-coated pits that are concentrated at the leading edge of migrating cells. May facilitate primary cilium assembly. The chain is Alpha-tubulin N-acetyltransferase 1 from Sus scrofa (Pig).